A 506-amino-acid polypeptide reads, in one-letter code: 2-isopropylmalate synthase (506 aa).

The 263-residue stretch at 4–266 (ILFMDTTLRD…EPSMTLKEIK (263 aa)) folds into the Pyruvate carboxyltransferase domain. Mn(2+) contacts are provided by Asp13, His201, His203, and Asn237. Residues 390 to 506 (NITQLQVHFV…KLKSFIQLVK (117 aa)) form a regulatory domain region.

Belongs to the alpha-IPM synthase/homocitrate synthase family. LeuA type 1 subfamily. Homodimer. Mn(2+) is required as a cofactor.

It localises to the cytoplasm. The catalysed reaction is 3-methyl-2-oxobutanoate + acetyl-CoA + H2O = (2S)-2-isopropylmalate + CoA + H(+). Its pathway is amino-acid biosynthesis; L-leucine biosynthesis; L-leucine from 3-methyl-2-oxobutanoate: step 1/4. Catalyzes the condensation of the acetyl group of acetyl-CoA with 3-methyl-2-oxobutanoate (2-ketoisovalerate) to form 3-carboxy-3-hydroxy-4-methylpentanoate (2-isopropylmalate). In Bacillus thuringiensis (strain Al Hakam), this protein is 2-isopropylmalate synthase.